A 198-amino-acid chain; its full sequence is Ribonuclease HII (198 aa).

Positions 3–194 (RRVCGVDEAG…VKRCLALGQQ (192 aa)) constitute an RNase H type-2 domain. Residues Asp9, Glu10, and Asp101 each coordinate a divalent metal cation.

It belongs to the RNase HII family. Mn(2+) serves as cofactor. Requires Mg(2+) as cofactor.

The protein localises to the cytoplasm. It carries out the reaction Endonucleolytic cleavage to 5'-phosphomonoester.. Endonuclease that specifically degrades the RNA of RNA-DNA hybrids. The chain is Ribonuclease HII from Laribacter hongkongensis (strain HLHK9).